A 186-amino-acid polypeptide reads, in one-letter code: Ribosome-recycling factor (186 aa).

The protein belongs to the RRF family.

It is found in the cytoplasm. In terms of biological role, responsible for the release of ribosomes from messenger RNA at the termination of protein biosynthesis. May increase the efficiency of translation by recycling ribosomes from one round of translation to another. In Cupriavidus metallidurans (strain ATCC 43123 / DSM 2839 / NBRC 102507 / CH34) (Ralstonia metallidurans), this protein is Ribosome-recycling factor.